The following is a 345-amino-acid chain: D-fructose 1,6-bisphosphatase class 2/sedoheptulose 1,7-bisphosphatase (345 aa).

The Mn(2+) site is built by Asp33, Glu57, Asp97, and Glu100. Substrate-binding positions include 100-102 (EGT), Tyr131, 176-178 (RPR), and 198-200 (DGD). Residue Glu225 participates in Mn(2+) binding.

This sequence belongs to the FBPase class 2 family. In terms of assembly, homotetramer. It depends on Mn(2+) as a cofactor.

It carries out the reaction beta-D-fructose 1,6-bisphosphate + H2O = beta-D-fructose 6-phosphate + phosphate. It catalyses the reaction D-sedoheptulose 1,7-bisphosphate + H2O = D-sedoheptulose 7-phosphate + phosphate. It functions in the pathway carbohydrate biosynthesis; Calvin cycle. Catalyzes the hydrolysis of fructose 1,6-bisphosphate (Fru 1,6-P2) and sedoheptulose 1,7-bisphosphate (Sed 1,7-P2) to fructose 6-phosphate and sedoheptulose 7-phosphate, respectively. The chain is D-fructose 1,6-bisphosphatase class 2/sedoheptulose 1,7-bisphosphatase from Synechocystis sp. (strain ATCC 27184 / PCC 6803 / Kazusa).